Here is a 151-residue protein sequence, read N- to C-terminus: SsrA-binding protein (151 aa).

A disordered region spans residues 132 to 151 (KRQTIKKRDQDREIHRKYGI).

The protein belongs to the SmpB family.

The protein localises to the cytoplasm. Its function is as follows. Required for rescue of stalled ribosomes mediated by trans-translation. Binds to transfer-messenger RNA (tmRNA), required for stable association of tmRNA with ribosomes. tmRNA and SmpB together mimic tRNA shape, replacing the anticodon stem-loop with SmpB. tmRNA is encoded by the ssrA gene; the 2 termini fold to resemble tRNA(Ala) and it encodes a 'tag peptide', a short internal open reading frame. During trans-translation Ala-aminoacylated tmRNA acts like a tRNA, entering the A-site of stalled ribosomes, displacing the stalled mRNA. The ribosome then switches to translate the ORF on the tmRNA; the nascent peptide is terminated with the 'tag peptide' encoded by the tmRNA and targeted for degradation. The ribosome is freed to recommence translation, which seems to be the essential function of trans-translation. The protein is SsrA-binding protein of Lactobacillus gasseri (strain ATCC 33323 / DSM 20243 / BCRC 14619 / CIP 102991 / JCM 1131 / KCTC 3163 / NCIMB 11718 / NCTC 13722 / AM63).